The primary structure comprises 275 residues: Putative pyruvate, phosphate dikinase regulatory protein (275 aa).

An ADP-binding site is contributed by 151-158 (GVSRTSKT).

Belongs to the pyruvate, phosphate/water dikinase regulatory protein family. PDRP subfamily.

It catalyses the reaction N(tele)-phospho-L-histidyl/L-threonyl-[pyruvate, phosphate dikinase] + ADP = N(tele)-phospho-L-histidyl/O-phospho-L-threonyl-[pyruvate, phosphate dikinase] + AMP + H(+). The enzyme catalyses N(tele)-phospho-L-histidyl/O-phospho-L-threonyl-[pyruvate, phosphate dikinase] + phosphate + H(+) = N(tele)-phospho-L-histidyl/L-threonyl-[pyruvate, phosphate dikinase] + diphosphate. Bifunctional serine/threonine kinase and phosphorylase involved in the regulation of the pyruvate, phosphate dikinase (PPDK) by catalyzing its phosphorylation/dephosphorylation. In Rhodospirillum rubrum (strain ATCC 11170 / ATH 1.1.1 / DSM 467 / LMG 4362 / NCIMB 8255 / S1), this protein is Putative pyruvate, phosphate dikinase regulatory protein.